A 548-amino-acid polypeptide reads, in one-letter code: MASAAVGNYEEEIVRPVADFSPSLWGDHFLSFSIDNQVAEKYAQEIEPLKEQTRSMLLATGRKLADTLNLIDTIERLGISYYFEKEIDEILDHIYNQNSNCNDFCTSALQFRLLRQHGFNISPQIFSKFQDENGKFRESLASDVLGLLNLYEASHVRTHADDILEDALAFSTIHLESAAPHLKSPLREQVTHALEQCLHKGVPRVETRFFISSIYEKEQSKNNVLLRFAKLDFNLLQMLHKQELAEVSRWWKDLDFVTTLPYARDRVVECYFWALGVYFEPQYSQARVMLVKTISMISIVDDTFDAYGTVKELEAYTDAIQRWDINEIDRLPHYMKISYKAILDLYKDYEKELSSAEKSHIVCHAIERMKEVVGHYNVESTWFIEGYMPPVSEYLSNALATTTYYYLATTSYLGMKSATEQDFEWLSKNPKILEASVIICRVIDDTATYEVEKSRGQIATGIECCMRDYGISTKKAMAKFQKMAETAWKDINEGLLRPTPVSTEFLTLILNLARIVEVTYIHNLDGYTHPEKVLKPHIINLLVDSIKI.

Residues aspartate 301, aspartate 305, aspartate 444, threonine 448, and glutamate 452 each contribute to the Mg(2+) site. The short motif at 301–305 is the DDXXD motif element; that stretch reads DDTFD.

This sequence belongs to the terpene synthase family. As to quaternary structure, monomer. The cofactor is Mg(2+). In terms of tissue distribution, expressed in roots, but not in shoots.

It localises to the cytoplasm. It carries out the reaction (2E,6E)-farnesyl diphosphate = (+)-5-epi-aristolochene + diphosphate. The protein operates within secondary metabolite biosynthesis; terpenoid biosynthesis. In terms of biological role, catalyzes the cyclization of trans,trans-farnesyl diphosphate (FPP) to the bicyclic intermediate 5-epi-aristolochene, initial step in the conversion of FPP to the sesquiterpenoid antifungal phytoalexin capsidiol. Produces germacrene A as an enzyme-bound intermediate that is not released by the enzyme, but is further cyclized to produce the bicyclic 5-epi-aristolochene. The chain is 5-epi-aristolochene synthase 1 (EAS) from Nicotiana attenuata (Coyote tobacco).